We begin with the raw amino-acid sequence, 756 residues long: Centromere protein I (756 aa).

Residues 1–60 form a disordered region; it reads MSPQKRVKNVQAQNRTSQGSSSFQTTLSAWKVKQDPSNSKNISKHGQNNPVGDYEHADDQ. 2 stretches are compositionally biased toward polar residues: residues 10 to 28 and 35 to 50; these read VQAQNRTSQGSSSFQTTLS and DPSNSKNISKHGQNNP.

It belongs to the CENP-I/CTF3 family. In terms of assembly, component of the CENPA-CAD complex, composed of CENPI, CENPK, CENPL, CENPO, CENPP, CENPQ, CENPR and CENPS. The CENPA-CAD complex interacts with the CENPA-NAC complex, at least composed of CENPA, CENPC, CENPH, CENPM, CENPN, CENPT and CENPU. Interacts with SENP6. In terms of processing, sumoylated. Sumoylated form can be polyubiquitinated by RNF4, leading to its degradation. Desumoylation by SENP6 prevents its degradation.

The protein resides in the nucleus. Its subcellular location is the chromosome. The protein localises to the centromere. In terms of biological role, component of the CENPA-CAD (nucleosome distal) complex, a complex recruited to centromeres which is involved in assembly of kinetochore proteins, mitotic progression and chromosome segregation. May be involved in incorporation of newly synthesized CENPA into centromeres via its interaction with the CENPA-NAC complex. Required for the localization of CENPF, MAD1L1 and MAD2 (MAD2L1 or MAD2L2) to kinetochores. Involved in the response of gonadal tissues to follicle-stimulating hormone. The polypeptide is Centromere protein I (CENPI) (Homo sapiens (Human)).